The sequence spans 435 residues: Probable glycine dehydrogenase (decarboxylating) subunit 1 (435 aa).

It belongs to the GcvP family. N-terminal subunit subfamily. In terms of assembly, the glycine cleavage system is composed of four proteins: P, T, L and H. In this organism, the P 'protein' is a heterodimer of two subunits.

It catalyses the reaction N(6)-[(R)-lipoyl]-L-lysyl-[glycine-cleavage complex H protein] + glycine + H(+) = N(6)-[(R)-S(8)-aminomethyldihydrolipoyl]-L-lysyl-[glycine-cleavage complex H protein] + CO2. Its function is as follows. The glycine cleavage system catalyzes the degradation of glycine. The P protein binds the alpha-amino group of glycine through its pyridoxal phosphate cofactor; CO(2) is released and the remaining methylamine moiety is then transferred to the lipoamide cofactor of the H protein. The chain is Probable glycine dehydrogenase (decarboxylating) subunit 1 from Coprothermobacter proteolyticus (strain ATCC 35245 / DSM 5265 / OCM 4 / BT).